We begin with the raw amino-acid sequence, 80 residues long: Raniseptin-5 (80 aa).

An N-terminal signal peptide occupies residues 1–22 (MAFLKKSLFLVLFLGIVSLSIC). Positions 23-49 (EEEKREGEEEEKQEEENEELSEEELRE) are excised as a propeptide.

The protein belongs to the frog skin active peptide (FSAP) family. Dermaseptin subfamily. As to expression, expressed by the skin glands.

Its subcellular location is the secreted. Has antibacterial activity. This chain is Raniseptin-5, found in Boana raniceps (Chaco tree frog).